A 352-amino-acid chain; its full sequence is Chorismate synthase (352 aa).

Arg48 provides a ligand contact to NADP(+). Residues 125–127 (RSS), 237–238 (NA), Gly278, 293–297 (KPTSS), and Arg319 each bind FMN.

Belongs to the chorismate synthase family. As to quaternary structure, homotetramer. FMNH2 serves as cofactor.

The catalysed reaction is 5-O-(1-carboxyvinyl)-3-phosphoshikimate = chorismate + phosphate. It participates in metabolic intermediate biosynthesis; chorismate biosynthesis; chorismate from D-erythrose 4-phosphate and phosphoenolpyruvate: step 7/7. Catalyzes the anti-1,4-elimination of the C-3 phosphate and the C-6 proR hydrogen from 5-enolpyruvylshikimate-3-phosphate (EPSP) to yield chorismate, which is the branch point compound that serves as the starting substrate for the three terminal pathways of aromatic amino acid biosynthesis. This reaction introduces a second double bond into the aromatic ring system. This is Chorismate synthase from Francisella tularensis subsp. tularensis (strain FSC 198).